A 403-amino-acid polypeptide reads, in one-letter code: MAVQTLDDLLNAGVEGRAVLVRSDLNVPLDGDRITDPGRIIASAPTLKALAEAGAKVIVTAHLGRPEGEPDPQYSLAPVAAKLAEVLGRNVQLAGDVVGQDALARAEGLTDGDVLLLENIRFDPRETSKDEAERTKLAKALVELVGDDGAFVSDGFGVVHRAQASVYEVAKLLPHYAGTLVDAEIKVLGKLTAEPERPYAVVLGGSKVSDKLAVIEALAPKVDTLVIGGGMYYTFLAAQGLSVGNSLCEESMIDTCKALLEQYADVIHIPQDVVIADSFSADAESKIVSVLEIPDGWMGLDIGPQSVRRFAAILTSAKTVFWNGPMGVFEFEKFAAGTKGVAEAIIEATGKGAYSVVGGGDSAAAVRQLGLPEDGFSHISTGGGASLEYLEGKELPGIAVLEG.

Residues 24–26, arginine 39, 62–65, arginine 121, and arginine 161 each bind substrate; these read DLN and HLGR. ATP contacts are provided by residues lysine 211, glycine 299, glutamate 330, and 359–362; that span reads GGDS.

Belongs to the phosphoglycerate kinase family. Monomer.

It is found in the cytoplasm. It catalyses the reaction (2R)-3-phosphoglycerate + ATP = (2R)-3-phospho-glyceroyl phosphate + ADP. Its pathway is carbohydrate degradation; glycolysis; pyruvate from D-glyceraldehyde 3-phosphate: step 2/5. This Rhodococcus opacus (strain B4) protein is Phosphoglycerate kinase.